The primary structure comprises 590 residues: MPKHYRPTGKKKEGNAARYMTRSQALKHLQVNLNLFRRLCIVKGIFPREPKKKIKGNHHTYYHVKDIAFLMHEPLLEKFREIKTYQKKVKKAKAKKNEELARLLLTRQPTYKLDRLIRERYPTFIDALRDLDDCLTMVHLFAVLPASDRENLEVKRVHNCRRLTHEWQAYISRSHALRKVFVSVKGIYYQAEIEGQKITWLTPHAIQQVFTNDVDFGVLLTFLEFYETLLAFINFKLYHSLNVKYPPILDSRLEALAADLYALSRYIDASSRGMAVEPKVDASFSSQSNDREESELRLAQLQHQLPSSEPGALMHLVADNNKEVEEDEETRVCKSLFKDLKFFLSREVPRESLQLVITAFGGMVSWEGEGAPFKEDDESITHHIIDKPSAGHLYLSRVYVQPQWIYDCVNARIILPTEKYLVGRIPPPHLSPFVDNEAEGYVPDYAETIKRLQAAARNEVLPLPGVGKEDLEDPQNLLYAGVMSRAEEAEAAKNKKKMAAQEKQYHEELKMEINGSKDVVAPVLAEGEGEESVPDAMQIAQEDADMPKVLMSRKKRKLYDAMKISQSRKRSGVEIIEQRKKRLNDTQPSS.

A BRCT domain is found at 332–422 (VCKSLFKDLK…IILPTEKYLV (91 aa)). Residues 561–590 (AMKISQSRKRSGVEIIEQRKKRLNDTQPSS) form a disordered region.

It belongs to the pescadillo family. Interacts with BOP1 and WDR12. Interacts with NSN1. In terms of tissue distribution, expressed in shoot and root apical meristems, epidermal cells and vasculature of developing leaves, trichome progenitor cells, young flowers, developing pollen grains and ovules, and mature pollen grains.

It is found in the nucleus. It localises to the nucleolus. The protein localises to the nucleoplasm. Its function is as follows. Required for maturation of ribosomal RNAs and formation of the large ribosomal subunit. Plays an essential role in cell growth and survival through its regulation of ribosome biogenesis and mitotic progression. Required for normal root cell growth and differentiation. This is Pescadillo homolog from Arabidopsis thaliana (Mouse-ear cress).